The following is a 523-amino-acid chain: MPSVMEKPSAGSGILSRSRAKTAPNGGQPHSEDDSSEEEHSHDSMIRVGTNYQAVIPECKPESPARYSNKELKGMLVWSPNHCVSDAKLDKYIAMAKEKHGYNIEQALGMLLWHKHDVEKSLADLANFTPFPDEWTVEDKVLFEQAFGFHGKCFQRIQQMLPDKLIPSLVKYYYSWKKTRSRTSVMDRQARRLGGRKDKEDSDELEEGRGAVSEGEPDTGDPKREPLPSRPLNARPGPGKKEIQVSQYRHHPLRTRRRPPKGMYLSPEGLTAVSGSPDLANLTLRGLDSQLISLKRQVQSMKQTNSSLRQALEGGIDPLRPPEANTKFNSRWTTDEQLLAVQAIRRYGKDFGAIAEVIGNKTLTQVKTFFVSYRRRFNLEEVLQEWEAEQDGAPTAPVPVEEARRGAPVPATALEEDDEVQITSVSTSVPRSVPPAPPPPPPPTSLSQPPPLLRPPLPTAPTLLRQPPPLQQGRFLQPRLAPNQPPPPLIRPALAASRHSARPGPQPPPTLVGAQLEPPAPSL.

The interval 1 to 43 (MPSVMEKPSAGSGILSRSRAKTAPNGGQPHSEDDSSEEEHSHD) is disordered. Over residues 30-43 (HSEDDSSEEEHSHD) the composition is skewed to basic and acidic residues. Residues Ser-31, Ser-35, Ser-36, and Ser-63 each carry the phosphoserine modification. The 86-residue stretch at 44 to 129 (SMIRVGTNYQ…KSLADLANFT (86 aa)) folds into the ELM2 domain. Lys-88 is covalently cross-linked (Glycyl lysine isopeptide (Lys-Gly) (interchain with G-Cter in SUMO2)). Residues 130-181 (PFPDEWTVEDKVLFEQAFGFHGKCFQRIQQMLPDKLIPSLVKYYYSWKKTRS) form the SANT 1 domain. The tract at residues 185-265 (VMDRQARRLG…RRRPPKGMYL (81 aa)) is disordered. Phosphoserine is present on Ser-202. Residues 248–260 (YRHHPLRTRRRPP) are compositionally biased toward basic residues. Residues 283–314 (TLRGLDSQLISLKRQVQSMKQTNSSLRQALEG) are a coiled coil. The SANT 2 domain occupies 327–378 (KFNSRWTTDEQLLAVQAIRRYGKDFGAIAEVIGNKTLTQVKTFFVSYRRRFN). A disordered region spans residues 387-523 (EAEQDGAPTA…AQLEPPAPSL (137 aa)). Residues 432–459 (SVPPAPPPPPPPTSLSQPPPLLRPPLPT) show a composition bias toward pro residues. Positions 460–482 (APTLLRQPPPLQQGRFLQPRLAP) are enriched in low complexity. An Asymmetric dimethylarginine modification is found at Arg-479.

The protein belongs to the CoREST family.

The protein resides in the nucleus. May act as a component of a corepressor complex that represses transcription. The polypeptide is REST corepressor 2 (Rcor2) (Rattus norvegicus (Rat)).